The following is a 256-amino-acid chain: uncharacterized protein (256 aa).

The protein belongs to the glycosyltransferase 2 family.

This is an uncharacterized protein from Acanthamoeba polyphaga mimivirus (APMV).